The chain runs to 729 residues: Phosphoribosylformylglycinamidine synthase subunit PurL (729 aa).

His-42 is a catalytic residue. The ATP site is built by Tyr-45 and Lys-84. Residue Glu-86 coordinates Mg(2+). Residues 87 to 90 (SHNH) and Arg-109 contribute to the substrate site. Residue His-88 is the Proton acceptor of the active site. Asp-110 provides a ligand contact to Mg(2+). Gln-238 provides a ligand contact to substrate. Position 266 (Asp-266) interacts with Mg(2+). 310 to 312 (ESQ) serves as a coordination point for substrate. Asp-492 and Gly-529 together coordinate ATP. Mg(2+) is bound at residue Asn-530. Ser-532 provides a ligand contact to substrate.

This sequence belongs to the FGAMS family. In terms of assembly, monomer. Part of the FGAM synthase complex composed of 1 PurL, 1 PurQ and 2 PurS subunits.

It localises to the cytoplasm. The catalysed reaction is N(2)-formyl-N(1)-(5-phospho-beta-D-ribosyl)glycinamide + L-glutamine + ATP + H2O = 2-formamido-N(1)-(5-O-phospho-beta-D-ribosyl)acetamidine + L-glutamate + ADP + phosphate + H(+). The protein operates within purine metabolism; IMP biosynthesis via de novo pathway; 5-amino-1-(5-phospho-D-ribosyl)imidazole from N(2)-formyl-N(1)-(5-phospho-D-ribosyl)glycinamide: step 1/2. Functionally, part of the phosphoribosylformylglycinamidine synthase complex involved in the purines biosynthetic pathway. Catalyzes the ATP-dependent conversion of formylglycinamide ribonucleotide (FGAR) and glutamine to yield formylglycinamidine ribonucleotide (FGAM) and glutamate. The FGAM synthase complex is composed of three subunits. PurQ produces an ammonia molecule by converting glutamine to glutamate. PurL transfers the ammonia molecule to FGAR to form FGAM in an ATP-dependent manner. PurS interacts with PurQ and PurL and is thought to assist in the transfer of the ammonia molecule from PurQ to PurL. The sequence is that of Phosphoribosylformylglycinamidine synthase subunit PurL from Campylobacter concisus (strain 13826).